A 373-amino-acid chain; its full sequence is Dual-specificity RNA methyltransferase RlmN (373 aa).

Residue Glu94 is the Proton acceptor of the active site. A Radical SAM core domain is found at 100–339 (EDDRATLCVS…VIVRKTRGDD (240 aa)). Cys107 and Cys344 are disulfide-bonded. 3 residues coordinate [4Fe-4S] cluster: Cys114, Cys118, and Cys121. Residues 168–169 (GE), Ser200, 222–224 (SIH), and Asn301 contribute to the S-adenosyl-L-methionine site. The active-site S-methylcysteine intermediate is Cys344.

It belongs to the radical SAM superfamily. RlmN family. [4Fe-4S] cluster serves as cofactor.

It localises to the cytoplasm. The catalysed reaction is adenosine(2503) in 23S rRNA + 2 reduced [2Fe-2S]-[ferredoxin] + 2 S-adenosyl-L-methionine = 2-methyladenosine(2503) in 23S rRNA + 5'-deoxyadenosine + L-methionine + 2 oxidized [2Fe-2S]-[ferredoxin] + S-adenosyl-L-homocysteine. The enzyme catalyses adenosine(37) in tRNA + 2 reduced [2Fe-2S]-[ferredoxin] + 2 S-adenosyl-L-methionine = 2-methyladenosine(37) in tRNA + 5'-deoxyadenosine + L-methionine + 2 oxidized [2Fe-2S]-[ferredoxin] + S-adenosyl-L-homocysteine. In terms of biological role, specifically methylates position 2 of adenine 2503 in 23S rRNA and position 2 of adenine 37 in tRNAs. m2A2503 modification seems to play a crucial role in the proofreading step occurring at the peptidyl transferase center and thus would serve to optimize ribosomal fidelity. In Shewanella sp. (strain MR-7), this protein is Dual-specificity RNA methyltransferase RlmN.